Here is a 397-residue protein sequence, read N- to C-terminus: Acetate kinase (397 aa).

Mg(2+) is bound at residue asparagine 8. Lysine 15 is an ATP binding site. Arginine 89 contributes to the substrate binding site. Aspartate 146 acts as the Proton donor/acceptor in catalysis. ATP is bound by residues 206–210, 281–283, and 329–333; these read HLGNG, DLR, and GVGEN. A Mg(2+)-binding site is contributed by glutamate 382.

The protein belongs to the acetokinase family. As to quaternary structure, homodimer. Mg(2+) serves as cofactor. Mn(2+) is required as a cofactor.

The protein resides in the cytoplasm. It carries out the reaction acetate + ATP = acetyl phosphate + ADP. It participates in metabolic intermediate biosynthesis; acetyl-CoA biosynthesis; acetyl-CoA from acetate: step 1/2. Catalyzes the formation of acetyl phosphate from acetate and ATP. Can also catalyze the reverse reaction. The protein is Acetate kinase of Bacillus thuringiensis subsp. konkukian (strain 97-27).